The primary structure comprises 885 residues: Leucine--tRNA ligase (885 aa).

Positions 48 to 58 (PYPSGKLHMGH) match the 'HIGH' region motif. Positions 639–643 (TMSKS) match the 'KMSKS' region motif. Residue Lys642 coordinates ATP.

Belongs to the class-I aminoacyl-tRNA synthetase family.

The protein localises to the cytoplasm. It carries out the reaction tRNA(Leu) + L-leucine + ATP = L-leucyl-tRNA(Leu) + AMP + diphosphate. The sequence is that of Leucine--tRNA ligase from Bordetella pertussis (strain Tohama I / ATCC BAA-589 / NCTC 13251).